A 427-amino-acid polypeptide reads, in one-letter code: MVSSQKLEKPIEMGSSEPLPIVDSDKRRKKKRKTRATDSLPGKFEDVYQLTSELLGEGAYAKVQGAVNLQSGKEYAVKIIEKQAGHSRSRVFREVETLYQCQGNRNILELIEFFEDDTRFYLVFEKLQGGSILAHIQKRKHFNEREASRVVRDVATALDFLHTKGIAHRDLKPENILCESPEKVSPVKICDFDLGSGVKLNNSCTPITTPELTTPCGSAEYMAPEVVEVFRDEATFYDKRCDLWSLGVVLYIMLSGYPPFVGHCGADCGWDRGEVCRMCQNKLFESIQEGKYEFPDKDWAHISNEAKDLISKLLVRDAKQRLSAAQVLQHPWVQGQAPERGLPTPQVLQRNSSTMDLTLFAAEAIALNRQLSQHEENELAEEQEALAEGLCSMKLSPPSKSRLARRRALAQAGRSRDANPCLTPAGL.

Residues Met1–Ile11 show a composition bias toward basic and acidic residues. The segment at Met1–Thr37 is disordered. Position 34 is a phosphothreonine; by PAK2 (Thr34). Ser39 bears the Phosphoserine; by PAK2 mark. The region spanning Gln49–Val333 is the Protein kinase domain. ATP-binding positions include Leu55–Val63 and Lys78. Residue Asp170 is the Proton acceptor of the active site. Ser180 and Ser185 each carry phosphoserine. A phosphothreonine mark is found at Thr209, Thr214, and Thr344. The disordered stretch occupies residues Arg407 to Leu427.

The protein belongs to the protein kinase superfamily. CAMK Ser/Thr protein kinase family. In terms of assembly, interacts with the C-terminal regions of EIF4G1 and EIF4G2. Also binds to dephosphorylated ERK1 and ERK2, and to the p38 kinases. It depends on Mg(2+) as a cofactor. Dual phosphorylation of Thr-209 and Thr-214 activates the kinase. Phosphorylation of Thr-344 activates the kinase. MAPK3/ERK1 is one of the kinases which activate MKNK1/MNK1. Phosphorylation by PAK2 leads to a reduced phosphorylation of EIF4G1. As to expression, ubiquitously expressed in all tissues examined, with high levels in skeletal muscle.

It catalyses the reaction L-seryl-[protein] + ATP = O-phospho-L-seryl-[protein] + ADP + H(+). The catalysed reaction is L-threonyl-[protein] + ATP = O-phospho-L-threonyl-[protein] + ADP + H(+). Phosphorylated and activated by the p38 kinases and kinases in the Erk pathway. In terms of biological role, may play a role in the response to environmental stress and cytokines. Appears to regulate translation by phosphorylating EIF4E, thus increasing the affinity of this protein for the 7-methylguanosine-containing mRNA cap. The protein is MAP kinase-interacting serine/threonine-protein kinase 1 (Mknk1) of Mus musculus (Mouse).